A 212-amino-acid polypeptide reads, in one-letter code: Deoxyribose-phosphate aldolase (212 aa).

Residue Asp-89 is the Proton donor/acceptor of the active site. Lys-151 serves as the catalytic Schiff-base intermediate with acetaldehyde. Lys-180 (proton donor/acceptor) is an active-site residue.

Belongs to the DeoC/FbaB aldolase family. DeoC type 1 subfamily.

The protein localises to the cytoplasm. The catalysed reaction is 2-deoxy-D-ribose 5-phosphate = D-glyceraldehyde 3-phosphate + acetaldehyde. Its pathway is carbohydrate degradation; 2-deoxy-D-ribose 1-phosphate degradation; D-glyceraldehyde 3-phosphate and acetaldehyde from 2-deoxy-alpha-D-ribose 1-phosphate: step 2/2. Its function is as follows. Catalyzes a reversible aldol reaction between acetaldehyde and D-glyceraldehyde 3-phosphate to generate 2-deoxy-D-ribose 5-phosphate. The protein is Deoxyribose-phosphate aldolase of Clostridium botulinum (strain Okra / Type B1).